A 403-amino-acid chain; its full sequence is Argininosuccinate synthase (403 aa).

9–17 contacts ATP; it reads AYSGGLDTS. Tyr-86 provides a ligand contact to L-citrulline. ATP is bound at residue Gly-116. Residues Thr-118, Asn-122, and Asp-123 each contribute to the L-aspartate site. Asn-122 provides a ligand contact to L-citrulline. The L-citrulline site is built by Arg-126, Ser-174, Glu-259, and Tyr-271.

This sequence belongs to the argininosuccinate synthase family. Type 1 subfamily. In terms of assembly, homotetramer.

It localises to the cytoplasm. It catalyses the reaction L-citrulline + L-aspartate + ATP = 2-(N(omega)-L-arginino)succinate + AMP + diphosphate + H(+). It participates in amino-acid biosynthesis; L-arginine biosynthesis; L-arginine from L-ornithine and carbamoyl phosphate: step 2/3. This Ligilactobacillus salivarius (strain UCC118) (Lactobacillus salivarius) protein is Argininosuccinate synthase.